The chain runs to 72 residues: Translation initiation factor IF-1 (72 aa).

Residues 1-72 enclose the S1-like domain; sequence MSKDDVIQMQ…SRARIVFRAK (72 aa).

Belongs to the IF-1 family. As to quaternary structure, component of the 30S ribosomal translation pre-initiation complex which assembles on the 30S ribosome in the order IF-2 and IF-3, IF-1 and N-formylmethionyl-tRNA(fMet); mRNA recruitment can occur at any time during PIC assembly.

The protein resides in the cytoplasm. One of the essential components for the initiation of protein synthesis. Stabilizes the binding of IF-2 and IF-3 on the 30S subunit to which N-formylmethionyl-tRNA(fMet) subsequently binds. Helps modulate mRNA selection, yielding the 30S pre-initiation complex (PIC). Upon addition of the 50S ribosomal subunit IF-1, IF-2 and IF-3 are released leaving the mature 70S translation initiation complex. In Methylibium petroleiphilum (strain ATCC BAA-1232 / LMG 22953 / PM1), this protein is Translation initiation factor IF-1.